The following is a 154-amino-acid chain: Ribonuclease 8 (154 aa).

Residues 1-27 (MAPARAGCCPLLLLLLGLRVAQIPVSA) form the signal peptide. Histidine 42 functions as the Proton acceptor in the catalytic mechanism. 3 disulfides stabilise this stretch: cysteine 64–cysteine 118, cysteine 82–cysteine 133, and cysteine 89–cysteine 96. Residues 65–69 (KDLNT) and lysine 90 each bind substrate. The active-site Proton donor is histidine 149.

The protein belongs to the pancreatic ribonuclease family.

It is found in the secreted. Has a low ribonuclease activity. In Miopithecus talapoin (Angolan talapoin), this protein is Ribonuclease 8 (RNASE8).